The primary structure comprises 322 residues: Serine/threonine-protein phosphatase PP1 isozyme 6 (322 aa).

N-acetylmethionine is present on methionine 1. Aspartate 61, histidine 63, aspartate 89, and asparagine 121 together coordinate Mn(2+). Histidine 122 serves as the catalytic Proton donor. Mn(2+) is bound by residues histidine 170 and histidine 245. The interval glycine 303–arginine 322 is disordered.

The protein belongs to the PPP phosphatase family. PP-1 subfamily. Mn(2+) serves as cofactor. As to expression, strongly up-regulated within developing flowers, especially in the tapetum, the developing and mature pollen and in the ovaries.

The protein localises to the nucleus. It localises to the cytoplasm. It carries out the reaction O-phospho-L-seryl-[protein] + H2O = L-seryl-[protein] + phosphate. The catalysed reaction is O-phospho-L-threonyl-[protein] + H2O = L-threonyl-[protein] + phosphate. Its activity is regulated as follows. Phosphatase activity is strongly reduced by the protein phosphatase inhibitor 2 (I-2). Its function is as follows. Serine/threonine-protein phosphatase that possesses phosphatase activity toward para-nitrophenyl phosphate (pNPP) in vitro. In Arabidopsis thaliana (Mouse-ear cress), this protein is Serine/threonine-protein phosphatase PP1 isozyme 6.